Consider the following 310-residue polypeptide: Ribose-phosphate pyrophosphokinase (310 aa).

Residues 34-36 (DQE) and 93-94 (RQ) contribute to the ATP site. Mg(2+)-binding residues include His-127 and Asp-167. Lys-190 is a catalytic residue. D-ribose 5-phosphate contacts are provided by residues Arg-192, Asp-216, and 220–224 (DSGGT).

The protein belongs to the ribose-phosphate pyrophosphokinase family. Class I subfamily. In terms of assembly, homohexamer. Mg(2+) serves as cofactor.

It localises to the cytoplasm. The enzyme catalyses D-ribose 5-phosphate + ATP = 5-phospho-alpha-D-ribose 1-diphosphate + AMP + H(+). Its pathway is metabolic intermediate biosynthesis; 5-phospho-alpha-D-ribose 1-diphosphate biosynthesis; 5-phospho-alpha-D-ribose 1-diphosphate from D-ribose 5-phosphate (route I): step 1/1. Its function is as follows. Involved in the biosynthesis of the central metabolite phospho-alpha-D-ribosyl-1-pyrophosphate (PRPP) via the transfer of pyrophosphoryl group from ATP to 1-hydroxyl of ribose-5-phosphate (Rib-5-P). The protein is Ribose-phosphate pyrophosphokinase of Brucella melitensis biotype 1 (strain ATCC 23456 / CCUG 17765 / NCTC 10094 / 16M).